A 215-amino-acid polypeptide reads, in one-letter code: MRTGIIAQKIGMTSVFNDKGERISLTLVKVDGCQVVGHKTLAKHGYNALVIGVKDQKISRVTKPMKQVFANAKISPKTKLKEFRISEDNFIDIASILEVDHFSVGQFVDITATTIGKGFAGSMKRHNFRGLEASHGVSISHRSHGSTGQRQDPGKVFKGKKMAGHMGCNQVTIQNLKIFAIDTNRKLIMIQGSIPGHKNSYLLVKDAIKKASITI.

The disordered stretch occupies residues 136 to 155; sequence GVSISHRSHGSTGQRQDPGK. N5-methylglutamine is present on Gln-151.

It belongs to the universal ribosomal protein uL3 family. In terms of assembly, part of the 50S ribosomal subunit. Forms a cluster with proteins L14 and L19. In terms of processing, methylated by PrmB.

One of the primary rRNA binding proteins, it binds directly near the 3'-end of the 23S rRNA, where it nucleates assembly of the 50S subunit. The protein is Large ribosomal subunit protein uL3 of Rickettsia typhi (strain ATCC VR-144 / Wilmington).